The primary structure comprises 107 residues: Iron-binding protein IscA (107 aa).

3 residues coordinate Fe cation: C35, C99, and C101.

This sequence belongs to the HesB/IscA family. As to quaternary structure, homodimer; may form tetramers and higher multimers. It depends on Fe cation as a cofactor.

Is able to transfer iron-sulfur clusters to apo-ferredoxin. Multiple cycles of [2Fe2S] cluster formation and transfer are observed, suggesting that IscA acts catalytically. Recruits intracellular free iron so as to provide iron for the assembly of transient iron-sulfur cluster in IscU in the presence of IscS, L-cysteine and the thioredoxin reductase system TrxA/TrxB. The sequence is that of Iron-binding protein IscA from Salmonella newport (strain SL254).